We begin with the raw amino-acid sequence, 216 residues long: Phosphoribosylformylglycinamidine synthase subunit PurQ (216 aa).

The region spanning 2-216 is the Glutamine amidotransferase type-1 domain; that stretch reads SIGVIVFPGS…GRRMLEALLG (215 aa). The active-site Nucleophile is the cysteine 86. Residues histidine 193 and glutamate 195 contribute to the active site.

In terms of assembly, part of the FGAM synthase complex composed of 1 PurL, 1 PurQ and 2 PurS subunits.

The protein resides in the cytoplasm. It carries out the reaction N(2)-formyl-N(1)-(5-phospho-beta-D-ribosyl)glycinamide + L-glutamine + ATP + H2O = 2-formamido-N(1)-(5-O-phospho-beta-D-ribosyl)acetamidine + L-glutamate + ADP + phosphate + H(+). The catalysed reaction is L-glutamine + H2O = L-glutamate + NH4(+). The protein operates within purine metabolism; IMP biosynthesis via de novo pathway; 5-amino-1-(5-phospho-D-ribosyl)imidazole from N(2)-formyl-N(1)-(5-phospho-D-ribosyl)glycinamide: step 1/2. In terms of biological role, part of the phosphoribosylformylglycinamidine synthase complex involved in the purines biosynthetic pathway. Catalyzes the ATP-dependent conversion of formylglycinamide ribonucleotide (FGAR) and glutamine to yield formylglycinamidine ribonucleotide (FGAM) and glutamate. The FGAM synthase complex is composed of three subunits. PurQ produces an ammonia molecule by converting glutamine to glutamate. PurL transfers the ammonia molecule to FGAR to form FGAM in an ATP-dependent manner. PurS interacts with PurQ and PurL and is thought to assist in the transfer of the ammonia molecule from PurQ to PurL. The chain is Phosphoribosylformylglycinamidine synthase subunit PurQ from Synechococcus sp. (strain CC9605).